The following is a 681-amino-acid chain: Peroxisomal acyl-coenzyme A oxidase 2 (681 aa).

Residues S3 and S9 each carry the phosphoserine modification. K66, K137, K303, K453, K561, and K667 each carry N6-succinyllysine. Positions 679-681 match the Microbody targeting signal motif; the sequence is HKM.

Belongs to the acyl-CoA oxidase family. In terms of assembly, homodimer. FAD is required as a cofactor. As to expression, most abundant in liver. Also expressed in kidney. Not present in any other tissues tested.

It is found in the peroxisome. The catalysed reaction is (25R)-3alpha,7alpha,12alpha-trihydroxy-5beta-cholestan-26-oyl-CoA + A + H2O = (24R,25R)-3alpha,7alpha,12alpha,24-tetrahydroxy-5beta-cholestan-26-oyl-CoA + AH2. It carries out the reaction (25S)-3alpha,7alpha,12alpha-trihydroxy-5beta-cholestan-26-oyl-CoA + O2 = (24E)-3alpha,7alpha,12alpha-trihydroxy-5beta-cholest-24-en-26-oyl-CoA + H2O2. Functionally, oxidizes the CoA esters of the bile acid intermediates di- and tri-hydroxycoprostanic acids. Capable of oxidizing short as well as long chain 2-methyl branched fatty acids. The polypeptide is Peroxisomal acyl-coenzyme A oxidase 2 (Rattus norvegicus (Rat)).